The primary structure comprises 220 residues: Translin-1 (220 aa).

It belongs to the translin family. As to quaternary structure, forms an octameric ring-shaped structure, which is capable of binding DNA or RNA.

The protein resides in the cytoplasm. It localises to the nucleus. Functionally, DNA-binding protein that specifically recognizes consensus sequences at the breakpoint junctions in chromosomal translocations. Selectively binds single-stranded d(GT)n and d(GTT)n microsatellite repeats. Has much higher affinities for the homologous RNA sequences (GU)n and (GUU)n. Does not bind double-stranded DNA. Has a role in meiosis. This Schizosaccharomyces pombe (strain 972 / ATCC 24843) (Fission yeast) protein is Translin-1 (tsn1).